An 82-amino-acid polypeptide reads, in one-letter code: Metallothionein-like protein 2A (82 aa).

This sequence belongs to the metallothionein superfamily. Type 15 family. In terms of tissue distribution, expressed in stems, leaves, rachis, inflorescences and seeds.

In terms of biological role, metallothioneins have a high content of cysteine residues that bind various heavy metals. This Oryza sativa subsp. japonica (Rice) protein is Metallothionein-like protein 2A (MT2A).